The sequence spans 428 residues: Histone deacetylase 3 (428 aa).

Residues 3-316 are histone deacetylase; it reads KTVAYFYDPD…WTYETSLLVE (314 aa). 1D-myo-inositol 1,4,5,6-tetrakisphosphate is bound by residues His17, Gly21, and Lys25. The active site involves His135. Asp170, His172, and Asp259 together coordinate Zn(2+). A 1D-myo-inositol 1,4,5,6-tetrakisphosphate-binding site is contributed by Arg265. 2 stretches are compositionally biased toward basic and acidic residues: residues 388–405 and 415–428; these read DRTDEADAEERGPEENYS and DGDHDNDKESDVEI. The tract at residues 388–428 is disordered; that stretch reads DRTDEADAEERGPEENYSRPEAPNEFYDGDHDNDKESDVEI. The residue at position 424 (Ser424) is a Phosphoserine.

It belongs to the histone deacetylase family. HD type 1 subfamily. Interacts with HDAC7 and HDAC9. Interacts with DAXX, KDM4A, HDAC10 and DACH1. Found in a complex with NCOR1 and NCOR2. Component of the N-Cor repressor complex, at least composed of NCOR1, NCOR2, HDAC3, TBL1X, TBL1R, CORO2A and GPS2. Interacts with BCOR, MJD2A/JHDM3A, NRIP1, PRDM6 and SRY. Interacts with BTBD14B. Interacts with GLIS2. Interacts (via the DNA-binding domain) with NR2C1; the interaction recruits phosphorylated NR2C1 to PML bodies for sumoylation. Component of the Notch corepressor complex. Interacts with CBFA2T3 and NKAP. Interacts with APEX1; the interaction is not dependent on the acetylated status of APEX1. Interacts with ZMYND15. Interacts with SMRT/NCOR2 and BCL6 on DNA enhancer elements. Interacts with INSM1. Interacts with XBP1 isoform 1; the interaction occurs in endothelial cell (EC) under disturbed flow. Interacts (via C-terminus) with CCAR2 (via N-terminus). Interacts with and deacetylates MEF2D. Interacts with BEND3. Interacts with NKAPL. Interacts with DHX36; this interaction occurs in a RNA-dependent manner. Interacts weakly with CRY1; this interaction is enhanced in the presence of FBXL3. Interacts with FBXL3 and BMAL1. Interacts with NCOR1. Interacts with RARA. Interacts with SETD5. As to quaternary structure, (Microbial infection) Interacts with human cytomegalovirus (HHV-5) immediate early protein IE1; this interaction decreases histone acetylation and allows transcriptional activation by the virus. The cofactor is Zn(2+). Post-translationally, sumoylated in vitro. Deubiquitinated on 'Lys-63'-linked ubiquitin chains by USP38; leading to a decreased level of histone acetylation. In terms of tissue distribution, widely expressed.

The protein resides in the nucleus. It is found in the chromosome. Its subcellular location is the cytoplasm. It localises to the cytosol. It catalyses the reaction N(6)-acetyl-L-lysyl-[histone] + H2O = L-lysyl-[histone] + acetate. The enzyme catalyses N(6)-acetyl-L-lysyl-[protein] + H2O = L-lysyl-[protein] + acetate. It carries out the reaction N(6)-(2E)-butenoyl-L-lysyl-[protein] + H2O = (2E)-2-butenoate + L-lysyl-[protein]. The catalysed reaction is N(6)-(2-hydroxyisobutanoyl)-L-lysyl-[protein] + H2O = 2-hydroxy-2-methylpropanoate + L-lysyl-[protein]. It catalyses the reaction N(6)-[(S)-lactoyl]-L-lysyl-[protein] + H2O = (S)-lactate + L-lysyl-[protein]. Inositol tetraphosphate (1D-myo-inositol 1,4,5,6-tetrakisphosphate) promotes the histone deacetylase activity by acting as an intermolecular glue between HDAC3 and NCOR2, thereby promoting its association with the N-Cor complex, a prerequisite for the histone deacetylase activity. Histone deacetylase that catalyzes the deacetylation of lysine residues on the N-terminal part of the core histones (H2A, H2B, H3 and H4), and some other non-histone substrates. Histone deacetylation gives a tag for epigenetic repression and plays an important role in transcriptional regulation, cell cycle progression and developmental events. Histone deacetylases act via the formation of large multiprotein complexes, such as N-Cor repressor complex, which activate the histone deacetylase activity. Participates in the BCL6 transcriptional repressor activity by deacetylating the H3 'Lys-27' (H3K27) on enhancer elements, antagonizing EP300 acetyltransferase activity and repressing proximal gene expression. Acts as a molecular chaperone for shuttling phosphorylated NR2C1 to PML bodies for sumoylation. Contributes, together with XBP1 isoform 1, to the activation of NFE2L2-mediated HMOX1 transcription factor gene expression in a PI(3)K/mTORC2/Akt-dependent signaling pathway leading to endothelial cell (EC) survival under disturbed flow/oxidative stress. Regulates both the transcriptional activation and repression phases of the circadian clock in a deacetylase activity-independent manner. During the activation phase, promotes the accumulation of ubiquitinated BMAL1 at the E-boxes and during the repression phase, blocks FBXL3-mediated CRY1/2 ubiquitination and promotes the interaction of CRY1 and BMAL1. The NCOR1-HDAC3 complex regulates the circadian expression of the core clock gene BMAL1 and the genes involved in lipid metabolism in the liver. Also functions as a deacetylase for non-histone targets, such as KAT5, MEF2D, MAPK14, RARA and STAT3. Serves as a corepressor of RARA, mediating its deacetylation and repression, leading to inhibition of RARE DNA element binding. In association with RARA, plays a role in the repression of microRNA-10a and thereby in the inflammatory response. In addition to protein deacetylase activity, also acts as a protein-lysine deacylase by recognizing other acyl groups: catalyzes removal of (2E)-butenoyl (crotonyl), lactoyl (lactyl) and 2-hydroxyisobutanoyl (2-hydroxyisobutyryl) acyl groups from lysine residues, leading to protein decrotonylation, delactylation and de-2-hydroxyisobutyrylation, respectively. Catalyzes decrotonylation of MAPRE1/EB1. Mediates delactylation NBN/NBS1, thereby inhibiting DNA double-strand breaks (DSBs) via homologous recombination (HR). This Homo sapiens (Human) protein is Histone deacetylase 3 (HDAC3).